The chain runs to 137 residues: Large ribosomal subunit protein uL16 (137 aa).

Positions 1-17 (MLQPKRTKFRKQQKGRN) are enriched in basic residues. Residues 1–24 (MLQPKRTKFRKQQKGRNRGLAQSG) are disordered.

Belongs to the universal ribosomal protein uL16 family. Part of the 50S ribosomal subunit.

In terms of biological role, binds 23S rRNA and is also seen to make contacts with the A and possibly P site tRNAs. The sequence is that of Large ribosomal subunit protein uL16 from Dichelobacter nodosus (strain VCS1703A).